The chain runs to 337 residues: Monoacylglycerol lipase ABHD6 (337 aa).

At 1–19 the chain is on the extracellular side; it reads MDLDVVNMFVIAGGTLALP. A helical; Signal-anchor for type II membrane protein membrane pass occupies residues 20–42; it reads ILAFVASFLLWPSALIRIYYWYW. Topologically, residues 43-337 are cytoplasmic; sequence RRTLGMQVRY…HSTDNSKKLD (295 aa). An AB hydrolase-1 domain is found at 72 to 313; it reads PSILMLHGFS…CGHSVVMERP (242 aa). Ser-148 (nucleophile) is an active-site residue. Residues Asp-278 and His-306 each act as charge relay system in the active site.

This sequence belongs to the AB hydrolase superfamily.

Its subcellular location is the late endosome membrane. It localises to the lysosome membrane. The protein resides in the mitochondrion membrane. It carries out the reaction Hydrolyzes glycerol monoesters of long-chain fatty acids.. It catalyses the reaction 1-octanoylglycerol + H2O = octanoate + glycerol + H(+). The catalysed reaction is 1-decanoylglycerol + H2O = decanoate + glycerol + H(+). The enzyme catalyses 1-dodecanoylglycerol + H2O = dodecanoate + glycerol + H(+). It carries out the reaction 1-tetradecanoylglycerol + H2O = tetradecanoate + glycerol + H(+). It catalyses the reaction 2-hexadecanoylglycerol + H2O = glycerol + hexadecanoate + H(+). The catalysed reaction is 2-(9Z-octadecenoyl)-glycerol + H2O = glycerol + (9Z)-octadecenoate + H(+). The enzyme catalyses 1-(9Z-octadecenoyl)-glycerol + H2O = glycerol + (9Z)-octadecenoate + H(+). It carries out the reaction 2-(9Z,12Z-octadecadienoyl)-glycerol + H2O = (9Z,12Z)-octadecadienoate + glycerol + H(+). It catalyses the reaction 2-(5Z,8Z,11Z,14Z-eicosatetraenoyl)-glycerol + H2O = glycerol + (5Z,8Z,11Z,14Z)-eicosatetraenoate + H(+). The catalysed reaction is 1-(5Z,8Z,11Z,14Z-eicosatetraenoyl)-glycerol + H2O = glycerol + (5Z,8Z,11Z,14Z)-eicosatetraenoate + H(+). The enzyme catalyses 1-(9Z,12Z-octadecadienoyl)-glycerol + H2O = (9Z,12Z)-octadecadienoate + glycerol + H(+). It carries out the reaction 3-(9Z-octadecenoyl)-sn-glycero-1-phospho-(3'-(9Z-octadecenoyl)-1'-sn-glycerol) + H2O = 3-(9Z-octadecenoyl)-sn-glycero-1-phospho-(1'-sn-glycerol) + (9Z)-octadecenoate + H(+). It catalyses the reaction (S,S)-2-(9Z-octadecenoyl)-sn-glycero-1-phospho-(2'-(9Z-octadecenoyl)-1'-sn-glycerol) + H2O = (S,S)-2-(9Z-octadecenoyl)-sn-glycero-1-phospho-(1'-sn-glycerol) + (9Z)-octadecenoate + H(+). The catalysed reaction is (R,R)-2-(9Z-octadecenoyl)-sn-glycero-3-phospho-(2'-(9Z-octadecenoyl)-3'-sn-glycerol) + H2O = (R,R)-2-(9Z-octadecenoyl)-sn-glycero-3-phospho-(3'-sn-glycerol) + (9Z)-octadecenoate + H(+). Its function is as follows. Lipase that preferentially hydrolysis medium-chain saturated monoacylglycerols including 2-arachidonoylglycerol. Through 2-arachidonoylglycerol degradation may regulate endocannabinoid signaling pathways. Also has a lysophosphatidyl lipase activity with a preference for lysophosphatidylglycerol among other lysophospholipids. Also able to degrade bis(monoacylglycero)phosphate (BMP) and constitutes the major enzyme for BMP catabolism. BMP, also known as lysobisphosphatidic acid, is enriched in late endosomes and lysosomes and plays a key role in the formation of intraluminal vesicles and in lipid sorting. The protein is Monoacylglycerol lipase ABHD6 of Bos taurus (Bovine).